The following is a 976-amino-acid chain: Collagen alpha-1(I) chain (976 aa).

The residue at position 1 (Ser1) is a Phosphoserine. The disordered stretch occupies residues 1 to 976 (SAGGISVPGP…PGPPGPPGPP (976 aa)). Pro20, Pro23, Pro26, Pro35, Pro38, Pro41, Pro55, Pro70, Pro76, Pro85, and Pro91 each carry 4-hydroxyproline. Positions 58–72 (NGDDGEAGKPGRPGE) are enriched in basic and acidic residues. 5-hydroxylysine; alternate is present on Lys94. A glycan (O-linked (Gal...) hydroxylysine; alternate) is linked at Lys94. Phosphoserine is present on Ser100. 2 stretches are compositionally biased toward low complexity: residues 108–118 (DAGPAGPKGAP) and 132–150 (PGAS…TGAA). Pro118, Pro132, Pro153, Pro162, Pro165, Pro192, Pro195, Pro207, Pro213, Pro222, Pro228, Pro231, and Pro246 each carry 4-hydroxyproline. Positions 152-164 (PPGPTGPAGPPGF) are enriched in pro residues. Residues 198–237 (AGAAGPAGNPGADGQPGAKGANGAPGIAGAPGFPGARGPS) show a composition bias toward low complexity. Lys249 carries the post-translational modification 5-hydroxylysine. 8 positions are modified to 4-hydroxyproline: Pro255, Pro258, Pro266, Pro275, Pro290, Pro296, Pro304, and Pro310. Positions 294–308 (GLPGPGERGGPGSRG) are enriched in gly residues. Lys319 carries the post-translational modification 5-hydroxylysine. Pro328, Pro337, Pro343, Pro349, Pro358, Pro361, Pro370, Pro379, Pro385, Pro397, Pro406, Pro415, Pro418, Pro436, Pro453, Pro459, Pro465, Pro471, Pro477, Pro483, Pro495, Pro504, Pro517, Pro523, and Pro532 each carry 4-hydroxyproline. Residues 352 to 378 (KGLTGSPGSPGPDGKTGPPGPAGQDGR) show a composition bias toward low complexity. Residues 387-406 (ARGQAGVMGFPGPKGAAGEP) show a composition bias toward low complexity. Over residues 465-474 (PGEAGKPGEQ) the composition is skewed to low complexity. Residue Lys544 is modified to 5-hydroxylysine. 4-hydroxyproline is present on residues Pro550, Pro565, and Pro571. Residues 577–591 (SGPSGPAGPTGARGA) are compositionally biased toward low complexity. Phosphoserine is present on Ser580. A 4-hydroxyproline mark is found at Pro592, Pro598, Pro601, Pro610, Pro616, Pro634, Pro643, and Pro652. Over residues 604–631 (AGFAGPPGADGQPGAKGEPGDAGAKGDA) the composition is skewed to low complexity. Lys655 carries the 5-hydroxylysine modification. The segment covering 660–676 (SAGPPGATGFPGAAGRV) has biased composition (low complexity). Residues Pro664 and Pro670 each carry the 4-hydroxyproline modification. At Pro678 the chain carries 3-hydroxyproline. 4-hydroxyproline is present on residues Pro679, Pro688, Pro691, Pro718, Pro726, Pro735, Pro753, Pro762, Pro765, Pro771, Pro786, Pro792, Pro798, Pro806, and Pro812. Low complexity predominate over residues 723–735 (KGSPGADGPAGAP). Residues 785–795 (PPGPMGPPGLA) show a composition bias toward pro residues. Lys821 bears the 5-hydroxylysine mark. Positions 829–844 (PGPPGAPGAPGAPGPV) are enriched in pro residues. 4-hydroxyproline is present on residues Pro832, Pro835, and Pro838. Residues 864-878 (AGPAGARGPAGPQGP) show a composition bias toward low complexity. Over residues 879–893 (RGDKGETGEQGDRGI) the composition is skewed to basic and acidic residues. Lys882 is subject to 5-hydroxylysine. A 5-hydroxylysine; alternate modification is found at Lys894. Lys894 carries an O-linked (Gal...) hydroxylysine; alternate glycan. 4-hydroxyproline occurs at positions 907, 910, 928, and 943. The span at 910 to 943 (PGEQGPSGASGPAGPRGPPGSAGSPGKDGLNGLP) shows a compositional bias: low complexity. A 3-hydroxyproline modification is found at Pro948. Pro949 carries the post-translational modification 4-hydroxyproline. The segment covering 961 to 976 (VGPPGPPGPPGPPGPP) has biased composition (pro residues). Pro963 is modified (3-hydroxyproline). 4-hydroxyproline is present on Pro964. Residue Pro966 is modified to 3-hydroxyproline. Residue Pro967 is modified to 4-hydroxyproline. Position 969 is a 3-hydroxyproline (Pro969). Residues Pro970, Pro973, and Pro976 each carry the 4-hydroxyproline modification.

It belongs to the fibrillar collagen family. In terms of assembly, trimers of one alpha 2(I) and two alpha 1(I) chains. In terms of processing, contains mostly 4-hydroxyproline. Proline residues at the third position of the tripeptide repeating unit (G-X-Y) are hydroxylated in some or all of the chains. Post-translationally, contains 3-hydroxyproline at a few sites. This modification occurs on the first proline residue in the sequence motif Gly-Pro-Hyp, where Hyp is 4-hydroxyproline. Lysine residues at the third position of the tripeptide repeating unit (G-X-Y) are 5-hydroxylated in some or all of the chains. In terms of processing, O-glycosylated on hydroxylated lysine residues. The O-linked glycan consists of a Glc-Gal disaccharide. In terms of tissue distribution, expressed in bones.

The protein localises to the secreted. Its subcellular location is the extracellular space. It is found in the extracellular matrix. Its function is as follows. Type I collagen is a member of group I collagen (fibrillar forming collagen). The chain is Collagen alpha-1(I) chain from Acratocnus ye (Hispaniolan ground sloth).